A 154-amino-acid chain; its full sequence is Phosphopantetheine adenylyltransferase (154 aa).

Threonine 10 provides a ligand contact to substrate. Residues 10-11 and histidine 18 each bind ATP; that span reads TF. Residues lysine 42, leucine 74, and arginine 88 each contribute to the substrate site. ATP is bound by residues 89–91, glutamate 99, and 124–130; these read GLR and NAFISSS.

This sequence belongs to the bacterial CoaD family. In terms of assembly, homohexamer. Mg(2+) serves as cofactor.

It is found in the cytoplasm. The enzyme catalyses (R)-4'-phosphopantetheine + ATP + H(+) = 3'-dephospho-CoA + diphosphate. The protein operates within cofactor biosynthesis; coenzyme A biosynthesis; CoA from (R)-pantothenate: step 4/5. Reversibly transfers an adenylyl group from ATP to 4'-phosphopantetheine, yielding dephospho-CoA (dPCoA) and pyrophosphate. This Nautilia profundicola (strain ATCC BAA-1463 / DSM 18972 / AmH) protein is Phosphopantetheine adenylyltransferase.